A 678-amino-acid polypeptide reads, in one-letter code: Glycine--tRNA ligase beta subunit (678 aa).

Belongs to the class-II aminoacyl-tRNA synthetase family. In terms of assembly, tetramer of two alpha and two beta subunits.

The protein localises to the cytoplasm. The catalysed reaction is tRNA(Gly) + glycine + ATP = glycyl-tRNA(Gly) + AMP + diphosphate. In Streptococcus pneumoniae (strain Taiwan19F-14), this protein is Glycine--tRNA ligase beta subunit.